The sequence spans 534 residues: Ankyrin repeat domain-containing protein 34C (534 aa).

ANK repeat units follow at residues 10 to 39 (TDGNSLLKAVWLGRLRLTRLLLEGGAYINE), 43 to 80 (KGETALMVACITKHVDQQSISKSKMVKYLLDNRADPNI), 84 to 114 (SGKTALIHACIRRAGGEVVSLLLENGADPSL), and 118 to 147 (TGASALVYAINADDKDALKHLLDACKAKGK). The tract at residues 159–205 (SGTKTTKQYLNVPPSPKVEDRQSPPLCTTPSDVELKTSGLASPPSEK) is disordered. At Ser-301 the chain carries Phosphoserine. Disordered regions lie at residues 332 to 368 (YEKGQAPHPRLARRGTLPLDQEKSGMCPPGPSTLKDP) and 384 to 403 (QPVGDPPNSMSLESGKGPLD). Ser-446 is modified (phosphoserine). The tract at residues 480–503 (SKPASPLASGLKSMAPVAPNSPKR) is disordered.

This sequence belongs to the ANKRD34 family.

The polypeptide is Ankyrin repeat domain-containing protein 34C (Ankrd34c) (Mus musculus (Mouse)).